We begin with the raw amino-acid sequence, 1465 residues long: Ankyrin and armadillo repeat-containing protein (1465 aa).

Residues 313–329 (MGYLKLICFLIPFLLSL) traverse the membrane as a helical segment. ANK repeat units lie at residues 532–561 (AGYA…NVNQ), 582–611 (NGPT…DYTL), 615–644 (RGWM…SLLE), 651–680 (NQCT…NWRK), and 684–714 (KGNN…ELPV). ARM repeat units lie at residues 745–784 (DRYW…NIST), 786–825 (VSIV…DVAK), 827–865 (ENKD…VLCM), 868–907 (ESNQ…EVAR), 910–949 (KEVQ…SLAN), and 1085–1125 (PMSQ…CIVL). A disordered region spans residues 1431–1465 (KLGKDEQKANPDPPAFLNKLGKDEQNANPDPAESQ).

Its subcellular location is the membrane. In Mus musculus (Mouse), this protein is Ankyrin and armadillo repeat-containing protein (Ankar).